We begin with the raw amino-acid sequence, 320 residues long: Delta(7)-sterol 5(6)-desaturase erg3C (320 aa).

Helical transmembrane passes span 43 to 63 (VISILVLTQLGATSLYLFFSA), 91 to 111 (SSLSAIPFINILTLPWFLAEV), and 127 to 147 (PWLVVSSILYMAFNDIGIYWI). Positions 134–283 (ILYMAFNDIG…FTWADAYFGS (150 aa)) constitute a Fatty acid hydroxylase domain. The Histidine box-1 motif lies at 148-152 (HRLEH). A Histidine box-2 motif is present at residues 161 to 165 (HKPHH). A helical transmembrane segment spans residues 224 to 244 (YMVLFAAVQIWTILIHDGDMI). The Histidine box-3 signature appears at 259–263 (HTLHH).

The protein belongs to the sterol desaturase family. Fe cation serves as cofactor.

It localises to the endoplasmic reticulum membrane. Functionally, delta(7)-sterol 5(6)-desaturase; part of the third module of ergosterol biosynthesis pathway that includes the late steps of the pathway. Erg3C is a minor delta(7)-sterol 5(6)-desaturase within the ergosterol pathway, erg3B being the major one. The third module or late pathway involves the ergosterol synthesis itself through consecutive reactions that mainly occur in the endoplasmic reticulum (ER) membrane. Firstly, the squalene synthase erg9 catalyzes the condensation of 2 farnesyl pyrophosphate moieties to form squalene, which is the precursor of all steroids. Squalene synthase is crucial for balancing the incorporation of farnesyl diphosphate (FPP) into sterol and nonsterol isoprene synthesis. Secondly, squalene is converted into lanosterol by the consecutive action of the squalene epoxidase erg1 and the lanosterol synthase erg7. Then, the delta(24)-sterol C-methyltransferase erg6 methylates lanosterol at C-24 to produce eburicol. Eburicol is the substrate of the sterol 14-alpha demethylase encoded by cyp51A and cyp51B, to yield 4,4,24-trimethyl ergosta-8,14,24(28)-trienol. The C-14 reductase erg24 then reduces the C14=C15 double bond which leads to 4,4-dimethylfecosterol. A sequence of further demethylations at C-4, involving the C-4 demethylation complex containing the C-4 methylsterol oxidases erg25A or erg25B, the sterol-4-alpha-carboxylate 3-dehydrogenase erg26 and the 3-keto-steroid reductase erg27, leads to the production of fecosterol via 4-methylfecosterol. The C-8 sterol isomerase erg2 then catalyzes the reaction which results in unsaturation at C-7 in the B ring of sterols and thus converts fecosterol to episterol. The sterol-C5-desaturase erg3B then catalyzes the introduction of a C-5 double bond in the B ring to produce 5-dehydroepisterol. The 2 other sterol-C5-desaturases, erg3A and erg3C, seem to be less important in ergosterol biosynthesis. The C-22 sterol desaturase erg5 further converts 5-dehydroepisterol into ergosta-5,7,22,24(28)-tetraen-3beta-ol by forming the C-22(23) double bond in the sterol side chain. Finally, ergosta-5,7,22,24(28)-tetraen-3beta-ol is substrate of the C-24(28) sterol reductases erg4A and erg4B to produce ergosterol. Possible alternative sterol biosynthetic pathways might exist from fecosterol to ergosterol, depending on the activities of the erg3 isoforms. This chain is Delta(7)-sterol 5(6)-desaturase erg3C, found in Aspergillus fumigatus (strain ATCC MYA-4609 / CBS 101355 / FGSC A1100 / Af293) (Neosartorya fumigata).